The following is a 1256-amino-acid chain: MPTLWSPSTQHHGSSSGSMSSPLRKSVRCAQMALSPCSSNIQPCDDRDSQGTAEWDSSSTSEDSDFEDSLRRNVRKRAAKRPPKAIPVAKHPKKQSHIVPGGNDKNKSVPPTSDLFDAVKAARSCAQSLVDEWLENYKQDENAGFLELVNFFIRACGCKSTVTPEMFKTMSNSEIIQHLTEEFNEDSGDYPLTAPGPSWKKFQGSFCEFVKTLVCQCQYSLLFDGFPMDDLISLLIGLSDSQVRAFRHTSTLAAMKLMTSLVKVALQLSLHKDNNQRQYEAERNKGPEQRAPERLESLLEKRKEFQENQEEIEGMMNAIFRGVFVHRYRDILPEIRAVCIEEIGCWMQSYSTSFLNDSYLKYIGWTLHDKHKEVRLKCVKALAGLYSNQELSSRMELFTNRFKDRMVSMVMDRESEVAVEAIRLLTLILKNMEGVLTSADCEKIYSIVYISNRAMASSAGEFVYWKIFHPECGAKAVSGRERRRSPQAQRTFIYLLLAFFMESEHHDHAAYLVDSLWDCAGSYLKDWESLTSLLLQKDQNLGDMQERMLIEILVSSARQAAEGHPPVGRITGKKSLTAKERKLQAYDKVKLAEHLIPLLPQLLAKFSADAENVAPLLRLLSYFDLNIYCTQRLEKHLELLLQQLQEVVVKHVEPEVLEAAAHALYLLCKPEFTFFSRVDFARSQLVDLLTDRFQQELDDLMQSSFLDEDEVYSLTATLKRLSAFYNAHDLTRWEISEPCSRLLRKAVDTGEVPHQVILPALTLVYFSILWTVTHISESTSQKQLMSLKKRMVAFCELCQSCLSDVDPEIQEQAFVLLSDLLLIFSPQMVVGGRDFLRPLVFFPEATLQSELASFLMDHVFLQPGELGNGQSQEDHVQIELLHQRRRLLAGFCKLLLYGVLELDAASDVFKHYNKFYEDYGDIIKETLTRARQIDRCQCSRILLLSLKQLYTELIQEQGPQDLTELPAFIEMRDLARRFALSFGPQQLHNRDLVVMLHKEGIKFSLSELPPAGSSREPPNIAFLELLSEFSPRLFHQDKQLLLSYLEKCLQRVSMAPSHPWGPVTTYCHSLHLVENTAEASSQGPPHSKKRCIEVPRRLQEEESSSQGESLQLNSGPTTPTLTSTAVKRRQSPRTVGKRQKGGPGPGPGPGPGPGPGPGPGPGPGPGPELICSQQLSGTQRLKMSSAPCFQIRCDPSGSGLGKQMTRLSLMEEDEEEELRLLDEEWQCGDKLLHSPSSPSEHGLDLLDTTELNMEDF.

Low complexity predominate over residues Met1–Pro22. A disordered region spans residues Met1 to Pro110. The span at Arg72–Pro83 shows a compositional bias: basic residues. The SCD domain maps to Phe324–Met409. Disordered regions lie at residues Arg1096–Leu1169 and Lys1230–Phe1256. Positions Asn1113–Ala1125 are enriched in polar residues. Residues Val1126–Lys1140 are compositionally biased toward basic residues. The span at Gly1144 to Gly1166 shows a compositional bias: pro residues. Ser1234 bears the Phosphoserine mark.

It belongs to the SCC3 family. Component of the meiosis-specific cohesin complex, which also contains the SMC1 (SMC1A or SMC1B) and SMC3 heterodimer. Such complex likely contains RAD21, or the meiosis-specific related protein REC8. Interacts with CCDC79/TERB1; recruiting cohesin to telomeres to develop structural rigidity. Phosphorylated. As to expression, testis specific.

It localises to the nucleus. Its subcellular location is the chromosome. Its function is as follows. Meiosis specific component of cohesin complex. The cohesin complex is required for the cohesion of sister chromatids after DNA replication. The cohesin complex apparently forms a large proteinaceous ring within which sister chromatids can be trapped. At anaphase, the complex is cleaved and dissociates from chromatin, allowing sister chromatids to segregate. The meiosis-specific cohesin complex probably replaces mitosis specific cohesin complex when it dissociates from chromatin during prophase I. The chain is Cohesin subunit SA-3 (Stag3) from Rattus norvegicus (Rat).